Consider the following 183-residue polypeptide: Large ribosomal subunit protein mL43 (183 aa).

2 disordered regions span residues 120-144 (HTDN…TGCG) and 162-183 (PGAL…AQAE). Residues 122–139 (DNPSIQGQWTPSPTNGLP) show a composition bias toward polar residues. Residues 162–172 (PGALDRERDRI) are compositionally biased toward basic and acidic residues.

The protein belongs to the mitochondrion-specific ribosomal protein mL43 family. As to quaternary structure, component of the mitochondrial ribosome large subunit (39S) which comprises a 16S rRNA and about 50 distinct proteins. As to expression, ubiquitous with the highest levels in the liver, heart and kidneys. The skeletal muscle, brain and testis showed lower but detectable expression. Expression is coregulated with TWNK.

The protein localises to the mitochondrion. This is Large ribosomal subunit protein mL43 (Mrpl43) from Mus musculus (Mouse).